The primary structure comprises 282 residues: 4-diphosphocytidyl-2-C-methyl-D-erythritol kinase (282 aa).

Lysine 11 is an active-site residue. ATP is bound at residue 95 to 105; sequence PMGGGVGGGSS. Aspartate 137 is an active-site residue.

It belongs to the GHMP kinase family. IspE subfamily.

It catalyses the reaction 4-CDP-2-C-methyl-D-erythritol + ATP = 4-CDP-2-C-methyl-D-erythritol 2-phosphate + ADP + H(+). Its pathway is isoprenoid biosynthesis; isopentenyl diphosphate biosynthesis via DXP pathway; isopentenyl diphosphate from 1-deoxy-D-xylulose 5-phosphate: step 3/6. Catalyzes the phosphorylation of the position 2 hydroxy group of 4-diphosphocytidyl-2C-methyl-D-erythritol. This is 4-diphosphocytidyl-2-C-methyl-D-erythritol kinase from Haemophilus ducreyi (strain 35000HP / ATCC 700724).